Here is a 214-residue protein sequence, read N- to C-terminus: MHMAIGLVGRKCGMTRIFTDAGVSVPVTVIEVDPNRITQIKTLETDGYQAVQVTTGERRESRVTNAQKGHFAKAGVAAGRLVKEFRVTEAELEGREVGGTIGVDLFTVGQIVDVTGQSKGKGFQGGVKRWNFRTQDATHGNSVSHRVLGSTGQNQTPGRVFKGKKMAGHLGDERVTVQGLEIVSVDTERSVLVVKGAIPGATGGDVIVRPTIKA.

Residue Gln-155 is modified to N5-methylglutamine.

Belongs to the universal ribosomal protein uL3 family. As to quaternary structure, part of the 50S ribosomal subunit. Forms a cluster with proteins L14 and L19. Post-translationally, methylated by PrmB.

Functionally, one of the primary rRNA binding proteins, it binds directly near the 3'-end of the 23S rRNA, where it nucleates assembly of the 50S subunit. The protein is Large ribosomal subunit protein uL3 of Acinetobacter baumannii (strain ACICU).